The primary structure comprises 431 residues: Serine--tRNA ligase (431 aa).

An L-serine-binding site is contributed by 236–238; the sequence is TAE. 267–269 contributes to the ATP binding site; that stretch reads RSE. Residue Glu290 coordinates L-serine. 354–357 is a binding site for ATP; it reads EISS. Ser389 contacts L-serine.

It belongs to the class-II aminoacyl-tRNA synthetase family. Type-1 seryl-tRNA synthetase subfamily. As to quaternary structure, homodimer. The tRNA molecule binds across the dimer.

The protein localises to the cytoplasm. It carries out the reaction tRNA(Ser) + L-serine + ATP = L-seryl-tRNA(Ser) + AMP + diphosphate + H(+). It catalyses the reaction tRNA(Sec) + L-serine + ATP = L-seryl-tRNA(Sec) + AMP + diphosphate + H(+). Its pathway is aminoacyl-tRNA biosynthesis; selenocysteinyl-tRNA(Sec) biosynthesis; L-seryl-tRNA(Sec) from L-serine and tRNA(Sec): step 1/1. Catalyzes the attachment of serine to tRNA(Ser). Is also able to aminoacylate tRNA(Sec) with serine, to form the misacylated tRNA L-seryl-tRNA(Sec), which will be further converted into selenocysteinyl-tRNA(Sec). This Herminiimonas arsenicoxydans protein is Serine--tRNA ligase.